A 378-amino-acid chain; its full sequence is tRNA-specific 2-thiouridylase MnmA (378 aa).

ATP contacts are provided by residues 7–14 (GLSGGVDS) and M33. An interaction with target base in tRNA region spans residues 102-104 (NPD). The active-site Nucleophile is the C107. C107 and C209 form a disulfide bridge. G132 contributes to the ATP binding site. Positions 159–161 (KDQ) are interaction with tRNA. C209 functions as the Cysteine persulfide intermediate in the catalytic mechanism. The interaction with tRNA stretch occupies residues 316-317 (RY).

The protein belongs to the MnmA/TRMU family.

It localises to the cytoplasm. The catalysed reaction is S-sulfanyl-L-cysteinyl-[protein] + uridine(34) in tRNA + AH2 + ATP = 2-thiouridine(34) in tRNA + L-cysteinyl-[protein] + A + AMP + diphosphate + H(+). In terms of biological role, catalyzes the 2-thiolation of uridine at the wobble position (U34) of tRNA, leading to the formation of s(2)U34. The sequence is that of tRNA-specific 2-thiouridylase MnmA from Onion yellows phytoplasma (strain OY-M).